The following is a 197-amino-acid chain: MSWSLCSTHGVSSSIALTYGFRHRRRSTFRIFATSDGLEPKDDPPESPLPSSSSALGKDLKKVVNKTAATFAPRASTASKNPALPGTTLYKVFEVQGYASMFLGGVLSFNLLFPSSEPDLWRLMGMWSIWMFTIPSLRARDCPSKEKEALNYLFLIVPLLNVAIPFFWKSFALVWSADTVAFFAMYAWKLGWLERTE.

A chloroplast-targeting transit peptide spans Met1–Ser52. The segment at Ser35 to Leu56 is disordered. A run of 4 helical transmembrane segments spans residues Phe93–Phe113, Leu120–Arg140, Leu150–Ser170, and Leu173–Leu193.

The protein localises to the plastid. It localises to the chloroplast. The protein resides in the membrane. Its function is as follows. Plays a positive role in the immune response to the oomycetes P.brassicae, including induced oxidative burst (e.g. H(2)O(2)) and enhanced expression of defense-related genes. The polypeptide is Protein RESISTANCE TO PHYTOPHTHORA 1, chloroplastic (Arabidopsis thaliana (Mouse-ear cress)).